A 456-amino-acid polypeptide reads, in one-letter code: Putative gluconeogenesis factor (456 aa).

This sequence belongs to the gluconeogenesis factor family.

The protein localises to the cytoplasm. Required for morphogenesis under gluconeogenic growth conditions. The chain is Putative gluconeogenesis factor from Nostoc sp. (strain PCC 7120 / SAG 25.82 / UTEX 2576).